The chain runs to 423 residues: Kynureninase (423 aa).

Pyridoxal 5'-phosphate is bound by residues Leu105, Ser106, 133–136, Asp218, His221, and Tyr243; that span reads FPSD. Lys244 carries the N6-(pyridoxal phosphate)lysine modification. Residues Trp273 and Asn301 each contribute to the pyridoxal 5'-phosphate site.

It belongs to the kynureninase family. As to quaternary structure, homodimer. It depends on pyridoxal 5'-phosphate as a cofactor.

The enzyme catalyses L-kynurenine + H2O = anthranilate + L-alanine + H(+). It carries out the reaction 3-hydroxy-L-kynurenine + H2O = 3-hydroxyanthranilate + L-alanine + H(+). It functions in the pathway amino-acid degradation; L-kynurenine degradation; L-alanine and anthranilate from L-kynurenine: step 1/1. Its pathway is cofactor biosynthesis; NAD(+) biosynthesis; quinolinate from L-kynurenine: step 2/3. Catalyzes the cleavage of L-kynurenine (L-Kyn) and L-3-hydroxykynurenine (L-3OHKyn) into anthranilic acid (AA) and 3-hydroxyanthranilic acid (3-OHAA), respectively. The protein is Kynureninase of Xanthomonas oryzae pv. oryzae (strain PXO99A).